The sequence spans 227 residues: ATP-dependent dethiobiotin synthetase BioD (227 aa).

An ATP-binding site is contributed by 13–18 (DIGKTY). T17 serves as a coordination point for Mg(2+). Residue K38 is part of the active site. S42 contributes to the substrate binding site. Residues D55, 116–119 (EGSG), and 179–180 (NN) each bind ATP. Mg(2+) is bound by residues D55 and E116.

This sequence belongs to the dethiobiotin synthetase family. As to quaternary structure, homodimer. It depends on Mg(2+) as a cofactor.

The protein localises to the cytoplasm. The enzyme catalyses (7R,8S)-7,8-diammoniononanoate + CO2 + ATP = (4R,5S)-dethiobiotin + ADP + phosphate + 3 H(+). The protein operates within cofactor biosynthesis; biotin biosynthesis; biotin from 7,8-diaminononanoate: step 1/2. Its function is as follows. Catalyzes a mechanistically unusual reaction, the ATP-dependent insertion of CO2 between the N7 and N8 nitrogen atoms of 7,8-diaminopelargonic acid (DAPA, also called 7,8-diammoniononanoate) to form a ureido ring. In Clostridium botulinum (strain Alaska E43 / Type E3), this protein is ATP-dependent dethiobiotin synthetase BioD.